Reading from the N-terminus, the 206-residue chain is Isochorismatase family protein 1A (206 aa).

This sequence belongs to the isochorismatase family.

This Dictyostelium discoideum (Social amoeba) protein is Isochorismatase family protein 1A.